The chain runs to 414 residues: 3-oxoacyl-[acyl-carrier-protein] synthase 2 (414 aa).

A Ketosynthase family 3 (KS3) domain is found at lysine 3–arginine 413. Active-site for beta-ketoacyl synthase activity residues include cysteine 164, histidine 304, and histidine 342.

This sequence belongs to the thiolase-like superfamily. Beta-ketoacyl-ACP synthases family. In terms of assembly, homodimer.

The enzyme catalyses a fatty acyl-[ACP] + malonyl-[ACP] + H(+) = a 3-oxoacyl-[ACP] + holo-[ACP] + CO2. It carries out the reaction (9Z)-hexadecenoyl-[ACP] + malonyl-[ACP] + H(+) = 3-oxo-(11Z)-octadecenoyl-[ACP] + holo-[ACP] + CO2. The protein operates within lipid metabolism; fatty acid biosynthesis. In terms of biological role, involved in the type II fatty acid elongation cycle. Catalyzes the elongation of a wide range of acyl-ACP by the addition of two carbons from malonyl-ACP to an acyl acceptor. Can efficiently catalyze the conversion of palmitoleoyl-ACP (cis-hexadec-9-enoyl-ACP) to cis-vaccenoyl-ACP (cis-octadec-11-enoyl-ACP), an essential step in the thermal regulation of fatty acid composition. This is 3-oxoacyl-[acyl-carrier-protein] synthase 2 (fabF) from Vibrio cholerae serotype O1 (strain ATCC 39315 / El Tor Inaba N16961).